Consider the following 436-residue polypeptide: Testis-expressed protein 44 (436 aa).

Composition is skewed to acidic residues over residues methionine 1–glutamate 10 and leucine 45–isoleucine 54. Disordered stretches follow at residues methionine 1 to leucine 142 and alanine 165 to glycine 307. Composition is skewed to polar residues over residues alanine 81–serine 103 and asparagine 167–glutamate 195. A compositionally biased stretch (basic and acidic residues) spans glutamate 234–lysine 247. Residues glutamine 273–proline 289 are compositionally biased toward pro residues. At serine 375 the chain carries Phosphoserine.

It localises to the cytoplasm. The chain is Testis-expressed protein 44 (Tex44) from Rattus norvegicus (Rat).